A 674-amino-acid polypeptide reads, in one-letter code: DNA ligase (674 aa).

Residues 42-46, 91-92, and Glu121 contribute to the NAD(+) site; these read DNVYD and SM. The N6-AMP-lysine intermediate role is filled by Lys123. Arg144, Glu178, Lys294, and Lys318 together coordinate NAD(+). Residues Cys412, Cys415, Cys430, and Cys435 each coordinate Zn(2+). Residues 596–674 form the BRCT domain; that stretch reads VKDSFVAGKT…ETELLANLKD (79 aa).

The protein belongs to the NAD-dependent DNA ligase family. LigA subfamily. It depends on Mg(2+) as a cofactor. Mn(2+) is required as a cofactor.

The catalysed reaction is NAD(+) + (deoxyribonucleotide)n-3'-hydroxyl + 5'-phospho-(deoxyribonucleotide)m = (deoxyribonucleotide)n+m + AMP + beta-nicotinamide D-nucleotide.. DNA ligase that catalyzes the formation of phosphodiester linkages between 5'-phosphoryl and 3'-hydroxyl groups in double-stranded DNA using NAD as a coenzyme and as the energy source for the reaction. It is essential for DNA replication and repair of damaged DNA. This chain is DNA ligase, found in Lacticaseibacillus paracasei (strain ATCC 334 / BCRC 17002 / CCUG 31169 / CIP 107868 / KCTC 3260 / NRRL B-441) (Lactobacillus paracasei).